The following is a 1385-amino-acid chain: DNA-directed RNA polymerase subunit beta'' (1385 aa).

Zn(2+)-binding residues include Cys224, Cys294, Cys301, and Cys304.

It belongs to the RNA polymerase beta' chain family. RpoC2 subfamily. In plastids the minimal PEP RNA polymerase catalytic core is composed of four subunits: alpha, beta, beta', and beta''. When a (nuclear-encoded) sigma factor is associated with the core the holoenzyme is formed, which can initiate transcription. Zn(2+) serves as cofactor.

It localises to the plastid. The protein localises to the chloroplast. It carries out the reaction RNA(n) + a ribonucleoside 5'-triphosphate = RNA(n+1) + diphosphate. DNA-dependent RNA polymerase catalyzes the transcription of DNA into RNA using the four ribonucleoside triphosphates as substrates. The sequence is that of DNA-directed RNA polymerase subunit beta'' from Illicium oligandrum (Star anise).